Consider the following 339-residue polypeptide: Anthranilate phosphoribosyltransferase (339 aa).

5-phospho-alpha-D-ribose 1-diphosphate-binding positions include Gly-81, 84–85 (GD), Thr-89, 91–94 (NIST), 109–117 (KHGNRSVSS), and Ser-121. Anthranilate is bound at residue Gly-81. Residue Ser-93 participates in Mg(2+) binding. Residue Asn-112 participates in anthranilate binding. Residue Arg-165 participates in anthranilate binding. Mg(2+) contacts are provided by Asp-224 and Glu-225.

The protein belongs to the anthranilate phosphoribosyltransferase family. As to quaternary structure, homodimer. Mg(2+) is required as a cofactor.

The catalysed reaction is N-(5-phospho-beta-D-ribosyl)anthranilate + diphosphate = 5-phospho-alpha-D-ribose 1-diphosphate + anthranilate. Its pathway is amino-acid biosynthesis; L-tryptophan biosynthesis; L-tryptophan from chorismate: step 2/5. Catalyzes the transfer of the phosphoribosyl group of 5-phosphorylribose-1-pyrophosphate (PRPP) to anthranilate to yield N-(5'-phosphoribosyl)-anthranilate (PRA). The chain is Anthranilate phosphoribosyltransferase from Thermosynechococcus vestitus (strain NIES-2133 / IAM M-273 / BP-1).